The chain runs to 814 residues: Rho GTPase-activating protein 44 (814 aa).

A BAR domain is found at 14-249 (QTVGRAEKTE…IKAQQEAWVE (236 aa)). The Rho-GAP domain maps to 255-445 (KPLEEHLMIS…PIIQHADWFF (191 aa)). Disordered regions lie at residues 467 to 493 (ANYSSMPSPDMDPADRRQPEQARRPLS), 531 to 768 (SAGR…SMST), and 784 to 814 (STLRLSPLEHARRHSVTDKRDSEEESESTAL). Residues 479–489 (PADRRQPEQAR) are compositionally biased toward basic and acidic residues. Residue Ser-493 is modified to Phosphoserine. 6 stretches are compositionally biased toward low complexity: residues 531–541 (SAGRKAACAPP), 567–581 (SPATPAPALSPSGAS), 598–612 (SPGSGQKGSPGSIQG), 622–637 (PQPAASPSQLPADQSP), 684–704 (SPYGLSYPPGYSMASGQLSPA), and 741–752 (SVSLSASSPQST). The interval 727–814 (KPRQRPTLPP…SEEESESTAL (88 aa)) is interaction with BST2. Residues 790–805 (PLEHARRHSVTDKRDS) show a composition bias toward basic and acidic residues. Ser-805 bears the Phosphoserine mark. The short motif at 811–814 (STAL) is the PDZ-binding element.

In terms of assembly, interacts with BST2 (via cytoplasmic domain). Interacts (probably via PDZ-binding motif) with SHANK3 (via PDZ domain); the interaction takes place in dendritic spines and promotes GRIA1 exocytosis. In terms of tissue distribution, expressed in brain, detected at high levels in hippocampal CA1 (at protein level).

The protein localises to the cell projection. It localises to the dendritic spine. Its subcellular location is the recycling endosome. The protein resides in the presynapse. It is found in the dendrite. In terms of biological role, GTPase-activating protein (GAP) that stimulates the GTPase activity of Rho-type GTPases. Thereby, controls Rho-type GTPases cycling between their active GTP-bound and inactive GDP-bound states. Acts as a GAP at least for CDC42 and RAC1. In neurons, is involved in dendritic spine formation and synaptic plasticity in a specific RAC1-GAP activity. Limits the initiation of exploratory dendritic filopodia. Recruited to actin-patches that seed filopodia, binds specifically to plasma membrane sections that are deformed inward by acto-myosin mediated contractile forces. Acts through GAP activity on RAC1 to reduce actin polymerization necessary for filopodia formation. In association with SHANK3, promotes GRIA1 exocytosis from recycling endosomes and spine morphological changes associated to long-term potentiation. This is Rho GTPase-activating protein 44 from Rattus norvegicus (Rat).